We begin with the raw amino-acid sequence, 434 residues long: F-box/FBD/LRR-repeat protein At3g26920 (434 aa).

The region spanning 16–65 (EDRISQLPEALLLQILSLLPTKEVVAVSVLAKRWRFLWKMVPSLEFFYYF) is the F-box domain. LRR repeat units follow at residues 69–95 (LERF…HLNM), 100–125 (DPRI…VLKV), 145–172 (TLEL…NLHE), 173–198 (VEFV…VIHQ), 219–244 (VIVE…KIEG), 265–290 (IIDV…SLKV), and 315–341 (TYKP…KIFD). The 51-residue stretch at 353–403 (KWNEPKNVPECLLLHLETFVWTCYEGKLENEIELAKYILRNARRLKKATFS) folds into the FBD domain.

In Arabidopsis thaliana (Mouse-ear cress), this protein is F-box/FBD/LRR-repeat protein At3g26920.